Reading from the N-terminus, the 880-residue chain is Probable receptor-like protein kinase At5g38990 (880 aa).

The first 21 residues, 1 to 21 (MICHVLVIFTILVSAVVDATA), serve as a signal peptide directing secretion. The Extracellular segment spans residues 22–440 (SYEPTDVFLI…GKGKSSHVLP (419 aa)). Asparagine 46, asparagine 136, asparagine 158, asparagine 210, asparagine 256, asparagine 263, asparagine 297, and asparagine 324 each carry an N-linked (GlcNAc...) asparagine glycan. The helical transmembrane segment at 441–461 (IIIAVVGSAVALAFFVLVVVL) threads the bilayer. Over 462–880 (VVMKRKKKSN…FSEINEPKAR (419 aa)) the chain is Cytoplasmic. Positions 471–505 (NESSVDTTNKPSTNSSWGPLLHGTGSTNTKSASSL) are disordered. 2 stretches are compositionally biased toward polar residues: residues 472 to 487 (ESSV…NSSW) and 494 to 505 (TGSTNTKSASSL). Positions 525–810 (FEEKLIIGVG…EFALQLHETA (286 aa)) constitute a Protein kinase domain. ATP is bound by residues 531–539 (IGVGGFGSV) and lysine 554. The Proton acceptor role is filled by aspartate 653. The disordered stretch occupies residues 820 to 846 (LDLMPSGEVGTTTDGEDDLFSRTTGHV).

The protein belongs to the protein kinase superfamily. Ser/Thr protein kinase family.

The protein localises to the membrane. In Arabidopsis thaliana (Mouse-ear cress), this protein is Probable receptor-like protein kinase At5g38990.